Reading from the N-terminus, the 127-residue chain is Cuticle protein 4 (127 aa).

Residue glutamine 1 is modified to Pyrrolidone carboxylic acid. A run of 2 repeats spans residues 31–39 and 84–92.

This is Cuticle protein 4 from Blaberus craniifer (Death's head cockroach).